The following is a 59-amino-acid chain: Ribosome biogenesis protein Nop10 (59 aa).

This sequence belongs to the NOP10 family.

In terms of biological role, involved in ribosome biogenesis; more specifically in 18S rRNA pseudouridylation and in cleavage of pre-rRNA. The protein is Ribosome biogenesis protein Nop10 of Thermococcus sibiricus (strain DSM 12597 / MM 739).